Reading from the N-terminus, the 352-residue chain is C-C chemokine receptor type 5 (352 aa).

Over 1–30 the chain is Extracellular; it reads MDYQVSSPTYDIDYYTSEPCQKINVKQIAA. Sulfotyrosine is present on Tyr3. 2 O-linked (GalNAc...) serine glycosylation sites follow: Ser6 and Ser7. Tyr10, Tyr14, and Tyr15 each carry sulfotyrosine. Cystine bridges form between Cys20-Cys269 and Cys101-Cys178. A helical transmembrane segment spans residues 31-58; sequence RLLPPLYSLVFIFGFVGNILVVLILINC. At 59–68 the chain is on the cytoplasmic side; sequence KRLKSMTDIY. Residues 69–89 traverse the membrane as a helical segment; the sequence is LLNLAISDLLFLLTVPFWAHY. Topologically, residues 90–102 are extracellular; that stretch reads AAAQWDFGNTMCQ. A helical transmembrane segment spans residues 103–124; sequence LLTGLYFIGFFSGIFFIILLTI. Over 125 to 141 the chain is Cytoplasmic; the sequence is DRYLAIVHAVFALKART. The helical transmembrane segment at 142–166 threads the bilayer; the sequence is VTFGVVTSVITWVVAVFASLPGIIF. Residues 167 to 198 lie on the Extracellular side of the membrane; it reads TRSQREGLHYTCSPHFPYSQYQFWKNFQTLKI. Residues 199-218 traverse the membrane as a helical segment; it reads VILGLVLPLLVMVICYSGIL. Topologically, residues 219-235 are cytoplasmic; it reads KTLLRCRNEKKRHRAVR. The chain crosses the membrane as a helical span at residues 236–260; sequence LIFTIMIVYFLFWAPYNIVLLLNTF. The Extracellular portion of the chain corresponds to 261 to 277; the sequence is QEFFGLNNCSSSNRLDQ. Residues 278 to 301 traverse the membrane as a helical segment; that stretch reads AMQVTETLGMTHCCINPIIYAFVG. The Cytoplasmic segment spans residues 302 to 352; the sequence is EKFRNYLLVFFQKHIAKRFCKCCSIFQQEASERASSVYTRSTGEQEISVGL. S-palmitoyl cysteine attachment occurs at residues Cys321, Cys323, and Cys324. 4 positions are modified to phosphoserine; by BARK1: Ser336, Ser337, Ser342, and Ser349.

Belongs to the G-protein coupled receptor 1 family. In terms of assembly, interacts with PRAF2. Efficient ligand binding to CCL3/MIP-1alpha and CCL4/MIP-1beta requires sulfation, O-glycosylation and sialic acid modifications. Glycosylation on Ser-6 is required for efficient binding of CCL4. Interacts with GRK2. Interacts with ARRB1 and ARRB2. Interacts with CNIH4. Interacts with S100A4; this interaction stimulates T-lymphocyte chemotaxis. Sulfated on at least 2 of the N-terminal tyrosines. Sulfation is required for efficient binding of the chemokines, CCL3 and CCL4. Post-translationally, palmitoylation in the C-terminal is important for cell surface expression. In terms of processing, phosphorylation on serine residues in the C-terminal is stimulated by binding CC chemokines especially by APO-RANTES. O-glycosylated, but not N-glycosylated. Ser-6 appears to be the major site even if Ser-7 may be also O-glycosylated. Also sialylated glycans present which contribute to chemokine binding. Thr-16 and Ser-17 may also be glycosylated and, if so, with small moieties such as a T-antigen.

The protein resides in the cell membrane. Receptor for a number of inflammatory CC-chemokines including CCL3/MIP-1-alpha, CCL4/MIP-1-beta and RANTES and subsequently transduces a signal by increasing the intracellular calcium ion level. May play a role in the control of granulocytic lineage proliferation or differentiation. Participates in T-lymphocyte migration to the infection site by acting as a chemotactic receptor. This is C-C chemokine receptor type 5 (CCR5) from Cercocebus atys (Sooty mangabey).